A 281-amino-acid polypeptide reads, in one-letter code: MAFSDLTSRTVRFYDNWIKDADPRVENWLLMSSPLPQTIILGLYVYFVTSLGPKLMENRKPFELKKAMITYNFFIVLFSVYMCYEFVMSGWGTGYSFRCDIVDYSQSPRAMRMVHTCWLYYFSKFIELFDTIFFVLRKKNSQVTFLHVFHHTIMPWTWWFGVKFAAGGLGTFHALLNTAVHVVMYFYYGLCAMGPAYQKYLWWKKHLTSLQLVQFVLVTVHIGQIFFMEDCNYQYPVFLYIIMSYGCIFLLLFLHFWYRAYTKGQRLPKTMENGNCKSKHH.

A2 is subject to N-acetylalanine. At 2–27 (AFSDLTSRTVRFYDNWIKDADPRVEN) the chain is on the lumenal side. A helical transmembrane segment spans residues 28–48 (WLLMSSPLPQTIILGLYVYFV). The Cytoplasmic portion of the chain corresponds to 49–72 (TSLGPKLMENRKPFELKKAMITYN). A helical transmembrane segment spans residues 73–93 (FFIVLFSVYMCYEFVMSGWGT). Topologically, residues 94–115 (GYSFRCDIVDYSQSPRAMRMVH) are lumenal. A disulfide bridge connects residues C99 and C231. The helical transmembrane segment at 116–136 (TCWLYYFSKFIELFDTIFFVL) threads the bilayer. 3-oxoeicosanoyl-CoA is bound by residues K124, R137, K139, Q142, and H147. Residues 137 to 142 (RKKNSQ) lie on the Cytoplasmic side of the membrane. Residues 143–162 (VTFLHVFHHTIMPWTWWFGV) traverse the membrane as a helical segment. Positions 147 to 151 (HVFHH) match the HxxHH motif motif. The active-site Nucleophile is the H150. The Lumenal portion of the chain corresponds to 163 to 176 (KFAAGGLGTFHALL). The helical transmembrane segment at 177-197 (NTAVHVVMYFYYGLCAMGPAY) threads the bilayer. Positions 187, 204, 208, and 211 each coordinate 3-oxoeicosanoyl-CoA. The Cytoplasmic segment spans residues 198–206 (QKYLWWKKH). Residues 207-227 (LTSLQLVQFVLVTVHIGQIFF) form a helical membrane-spanning segment. At 228–236 (MEDCNYQYP) the chain is on the lumenal side. Residues 237–257 (VFLYIIMSYGCIFLLLFLHFW) traverse the membrane as a helical segment. The Cytoplasmic portion of the chain corresponds to 258-281 (YRAYTKGQRLPKTMENGNCKSKHH). R266 contributes to the 3-oxoeicosanoyl-CoA binding site. The short motif at 277–281 (KSKHH) is the Di-lysine motif element.

It belongs to the ELO family. ELOVL7 subfamily. In terms of assembly, homodimer. Interacts with TECR.

Its subcellular location is the endoplasmic reticulum membrane. The enzyme catalyses a very-long-chain acyl-CoA + malonyl-CoA + H(+) = a very-long-chain 3-oxoacyl-CoA + CO2 + CoA. The catalysed reaction is eicosanoyl-CoA + malonyl-CoA + H(+) = 3-oxodocosanoyl-CoA + CO2 + CoA. It catalyses the reaction (5Z,8Z,11Z,14Z)-eicosatetraenoyl-CoA + malonyl-CoA + H(+) = (7Z,10Z,13Z,16Z)-3-oxodocosatetraenoyl-CoA + CO2 + CoA. It carries out the reaction (6Z,9Z,12Z)-octadecatrienoyl-CoA + malonyl-CoA + H(+) = (8Z,11Z,14Z)-3-oxoeicosatrienoyl-CoA + CO2 + CoA. The enzyme catalyses (9Z,12Z)-octadecadienoyl-CoA + malonyl-CoA + H(+) = (11Z,14Z)-3-oxoicosa-11,14-dienoyl-CoA + CO2 + CoA. The catalysed reaction is (9Z)-octadecenoyl-CoA + malonyl-CoA + H(+) = 3-oxo-(11Z)-eicosenoyl-CoA + CO2 + CoA. It catalyses the reaction octadecanoyl-CoA + malonyl-CoA + H(+) = 3-oxoeicosanoyl-CoA + CO2 + CoA. It carries out the reaction hexadecanoyl-CoA + malonyl-CoA + H(+) = 3-oxooctadecanoyl-CoA + CO2 + CoA. The enzyme catalyses (9Z,12Z,15Z)-octadecatrienoyl-CoA + malonyl-CoA + H(+) = (11Z,14Z,17Z)-3-oxoeicosatrienoyl-CoA + CO2 + CoA. It participates in lipid metabolism; fatty acid biosynthesis. Its function is as follows. Catalyzes the first and rate-limiting reaction of the four reactions that constitute the long-chain fatty acids elongation cycle. This endoplasmic reticulum-bound enzymatic process allows the addition of 2 carbons to the chain of long- and very long-chain fatty acids (VLCFAs) per cycle. Condensing enzyme with higher activity toward C18 acyl-CoAs, especially C18:3(n-3) acyl-CoAs and C18:3(n-6)-CoAs. Also active toward C20:4-, C18:0-, C18:1-, C18:2- and C16:0-CoAs, and weakly toward C20:0-CoA. Little or no activity toward C22:0-, C24:0-, or C26:0-CoAs. May participate in the production of saturated and polyunsaturated VLCFAs of different chain lengths that are involved in multiple biological processes as precursors of membrane lipids and lipid mediators. In Rattus norvegicus (Rat), this protein is Very long chain fatty acid elongase 7.